The sequence spans 348 residues: Guanine nucleotide-binding protein alpha-13 subunit (348 aa).

G2 carries the N-myristoyl glycine lipid modification. A lipid anchor (S-palmitoyl cysteine) is attached at C3. The G-alpha domain maps to 34 to 348 (SHIRLLLLGS…VFKDIAKRKK (315 aa)). The tract at residues 37–50 (RLLLLGSAESGKTT) is G1 motif. Residues 42-49 (GSAESGKT), 176-182 (IMAYVPT), 201-205 (DIGGQ), 270-273 (NEID), and A326 each bind GTP. Residues 174 to 182 (DLIMAYVPT) are G2 motif. T182 contacts Mg(2+). A G3 motif region spans residues 197–206 (FQLFDIGGQK). Residues 266-273 (YLFLNEID) form a G4 motif region. The segment at 324-329 (CIAIDT) is G5 motif.

Belongs to the G-alpha family. G proteins are composed of 3 units; alpha, beta and gamma. The alpha chain contains the guanine nucleotide binding site.

Its function is as follows. Guanine nucleotide-binding proteins (G proteins) are involved as modulators or transducers in various transmembrane signaling systems. The protein is Guanine nucleotide-binding protein alpha-13 subunit (gpa-13) of Caenorhabditis elegans.